Here is a 274-residue protein sequence, read N- to C-terminus: Ribosome biogenesis protein UTP30 (274 aa).

It belongs to the universal ribosomal protein uL1 family. Highly divergent. As to quaternary structure, component of the 90S pre-ribosomes. Interacts with FAF1.

It is found in the nucleus. The protein localises to the nucleolus. In terms of biological role, involved in rRNA-processing and ribosome biosynthesis. This Saccharomyces cerevisiae (strain ATCC 204508 / S288c) (Baker's yeast) protein is Ribosome biogenesis protein UTP30 (UTP30).